We begin with the raw amino-acid sequence, 162 residues long: Cytochrome c-type biogenesis protein CcmE (162 aa).

Topologically, residues 1–7 (MTRKQRR) are cytoplasmic. A helical; Signal-anchor for type II membrane protein membrane pass occupies residues 8-28 (LTMIGGALVVLGIAAALVLNA). At 29 to 162 (LRDSIVFFST…EASSKQEVSQ (134 aa)) the chain is on the periplasmic side. H122 and Y126 together coordinate heme. The disordered stretch occupies residues 140-162 (HWKDDYGAQPGAAEASSKQEVSQ).

The protein belongs to the CcmE/CycJ family.

The protein localises to the cell inner membrane. Its function is as follows. Heme chaperone required for the biogenesis of c-type cytochromes. Transiently binds heme delivered by CcmC and transfers the heme to apo-cytochromes in a process facilitated by CcmF and CcmH. The chain is Cytochrome c-type biogenesis protein CcmE from Nitrobacter winogradskyi (strain ATCC 25391 / DSM 10237 / CIP 104748 / NCIMB 11846 / Nb-255).